Consider the following 60-residue polypeptide: Metallothionein B (60 aa).

The tract at residues 1–28 (MDPCDCSKSGTCNCGGSCTCTNCSCTTC) is beta. Residues Cys4, Cys6, Cys12, Cys14, Cys18, Cys20, Cys23, Cys25, Cys28, Cys32, Cys33, Cys35, Cys36, Cys40, Cys43, Cys47, Cys49, Cys54, Cys58, and Cys59 each contribute to the a divalent metal cation site. Residues 29–60 (KKSCCPCCPSGCTKCASGCVCKGKTCDTSCCQ) are alpha.

It belongs to the metallothionein superfamily. Type 1 family.

In terms of biological role, metallothioneins have a high content of cysteine residues that bind various heavy metals. The chain is Metallothionein B (mtb) from Dicentrarchus labrax (European seabass).